Reading from the N-terminus, the 292-residue chain is MNPFWNMPSASVRKRSDNDEKIATADQKISPARSSSAKKQLPSIPKNAVPITKPISPPLSVQSTNGTHASYGPFYLEYSLLAEFTLVVKQKLPGVYVQPSYSSALMWFGVIFIRHGLYQDGVFKFTVYIPDNYPDGECPRLVFDIPVFHPLVDPISGELDVKRAFTKWRRNHNHIWQVLMYARRIFYKIDTTSPLNPEAAVLYEKDVQLFKSKVVDSVKLCNSHLFDKPKIEDPYAIIFSPWNPVLHDDARERMLAQKKSEEQSRGLHVSGLSWVKPGSVLPFSKEENSLQT.

Residues 1-44 (MNPFWNMPSASVRKRSDNDEKIATADQKISPARSSSAKKQLPSI) form a disordered region. Residues 14–23 (KRSDNDEKIA) are compositionally biased toward basic and acidic residues. Positions 75–223 (YLEYSLLAEF…VVDSVKLCNS (149 aa)) constitute a UBC core domain.

This sequence belongs to the ubiquitin-conjugating enzyme family. FTS subfamily.

Its subcellular location is the cytoplasm. The protein localises to the cell membrane. In terms of biological role, may function to promote vesicle trafficking and/or fusion. May also regulate apoptosis. This Xenopus laevis (African clawed frog) protein is AKT-interacting protein homolog B (aktip-b).